Reading from the N-terminus, the 330-residue chain is Probable ADP,ATP carrier protein At5g56450 (330 aa).

The segment covering 1–10 has biased composition (acidic residues); sequence MCISKEDEED. Residues 1–22 are disordered; sequence MCISKEDEEDPSRNRRNQSPLS. 6 helical membrane passes run 27–61, 103–127, 137–171, 203–230, 236–270, and 300–325; these read LKHF…LQTQ, GSSV…RSIL, IFSG…RLAA, GLPA…EIFS, ELAL…IMMQ, and GALS…KRFL. 3 Solcar repeats span residues 28-126, 139-228, and 241-324; these read KHFQ…YRSI, SGAL…VKEI, and KRWG…VKRF. ADP-binding residues include R108 and K120. R264 contributes to the ADP binding site. The Substrate recognition motif lies at 264–269; sequence RRRIMM.

It belongs to the mitochondrial carrier (TC 2.A.29) family. As to quaternary structure, monomer.

The protein localises to the membrane. The enzyme catalyses ADP(in) + ATP(out) = ADP(out) + ATP(in). In terms of biological role, ADP:ATP antiporter that catalyzes the exchange of ADP and ATP across the membrane. The protein is Probable ADP,ATP carrier protein At5g56450 of Arabidopsis thaliana (Mouse-ear cress).